The sequence spans 198 residues: Holliday junction branch migration complex subunit RuvA (198 aa).

The domain I stretch occupies residues 1 to 61 (MYEYFEGIIQ…DNDQTLYGFE (61 aa)). Residues 62 to 140 (GAADKRTFNQ…TDGQPAAAAI (79 aa)) form a domain II region. The segment at 141–145 (APVAS) is flexible linker. A domain III region spans residues 146-198 (DVDSELADALAALVALGYPQRTVDGLTDTLKAFSAKTTDAYLREGLRLLSGKA).

Belongs to the RuvA family. Homotetramer. Forms an RuvA(8)-RuvB(12)-Holliday junction (HJ) complex. HJ DNA is sandwiched between 2 RuvA tetramers; dsDNA enters through RuvA and exits via RuvB. An RuvB hexamer assembles on each DNA strand where it exits the tetramer. Each RuvB hexamer is contacted by two RuvA subunits (via domain III) on 2 adjacent RuvB subunits; this complex drives branch migration. In the full resolvosome a probable DNA-RuvA(4)-RuvB(12)-RuvC(2) complex forms which resolves the HJ.

It is found in the cytoplasm. Its function is as follows. The RuvA-RuvB-RuvC complex processes Holliday junction (HJ) DNA during genetic recombination and DNA repair, while the RuvA-RuvB complex plays an important role in the rescue of blocked DNA replication forks via replication fork reversal (RFR). RuvA specifically binds to HJ cruciform DNA, conferring on it an open structure. The RuvB hexamer acts as an ATP-dependent pump, pulling dsDNA into and through the RuvAB complex. HJ branch migration allows RuvC to scan DNA until it finds its consensus sequence, where it cleaves and resolves the cruciform DNA. This chain is Holliday junction branch migration complex subunit RuvA, found in Lacticaseibacillus casei (strain BL23) (Lactobacillus casei).